The following is a 140-amino-acid chain: Nucleoside triphosphatase NudI (140 aa).

The Nudix hydrolase domain maps to 1–140 (MRHRTIVCPL…RVTLSLKGLL (140 aa)). The short motif at 38–58 (GVEPGERIEEALRREIREELG) is the Nudix box element.

It belongs to the Nudix hydrolase family. NudI subfamily. In terms of assembly, monomer. It depends on Mg(2+) as a cofactor.

The catalysed reaction is a ribonucleoside 5'-triphosphate + H2O = a ribonucleoside 5'-phosphate + diphosphate + H(+). It carries out the reaction a 2'-deoxyribonucleoside 5'-triphosphate + H2O = a 2'-deoxyribonucleoside 5'-phosphate + diphosphate + H(+). The enzyme catalyses dUTP + H2O = dUMP + diphosphate + H(+). It catalyses the reaction dTTP + H2O = dTMP + diphosphate + H(+). The catalysed reaction is dCTP + H2O = dCMP + diphosphate + H(+). In terms of biological role, catalyzes the hydrolysis of nucleoside triphosphates, with a preference for pyrimidine deoxynucleoside triphosphates (dUTP, dTTP and dCTP). The polypeptide is Nucleoside triphosphatase NudI (Klebsiella pneumoniae subsp. pneumoniae (strain ATCC 700721 / MGH 78578)).